The primary structure comprises 83 residues: Large ribosomal subunit protein eL43 (83 aa).

Zn(2+) contacts are provided by Cys38, Cys41, Cys56, and Cys59. The segment at Cys38–Cys59 adopts a C4-type zinc-finger fold.

The protein belongs to the eukaryotic ribosomal protein eL43 family. Putative zinc-binding subfamily. In terms of assembly, part of the 50S ribosomal subunit. Requires Zn(2+) as cofactor.

In terms of biological role, binds to the 23S rRNA. This Pyrococcus abyssi (strain GE5 / Orsay) protein is Large ribosomal subunit protein eL43.